A 703-amino-acid polypeptide reads, in one-letter code: Bifunctional arginine dihydrolase/ornithine cyclodeaminase AgrE (703 aa).

The interval 10-269 (CPPDHYDVDY…GAAKCLTLRV (260 aa)) is arginine dihydrolase. Residues Asn-22, Asp-65, Asn-71, Arg-90, and Arg-139 each contribute to the L-arginine site. Asn-22 contacts L-ornithine. Positions 90, 139, and 168 each coordinate L-ornithine. His-168 functions as the Proton donor/acceptor in the catalytic mechanism. L-arginine is bound by residues Asp-170 and Ala-258. An L-ornithine-binding site is contributed by Cys-264. Cys-264 (nucleophile) is an active-site residue. Residues 285-694 (SRIIRIEGHL…SLLTQQLDKL (410 aa)) are ornithine cyclodeaminase. NAD(+)-binding residues include Asn-524, Ala-525, Asp-603, Ser-635, Met-636, Leu-637, His-638, Asp-656, Asp-679, and Val-680.

It in the N-terminal section; belongs to the DDAH family. In the C-terminal section; belongs to the AgrE/ArgZ ornithine cyclodeaminase family. In terms of assembly, homotetramer. The cofactor is NAD(+).

It carries out the reaction L-arginine + 2 H2O + 2 H(+) = L-ornithine + 2 NH4(+) + CO2. It catalyses the reaction L-ornithine = L-proline + NH4(+). With respect to regulation, ornithine cyclodeaminase activity is inhibited by ATP. In terms of biological role, bifunctional enzyme involved in a cyanobacterial arginine utilization pathway that produces glutamate and enables cellular adaptation to nitrogen fluctuations. Catalyzes the hydrolysis of arginine to ornithine, with the release of ammonia and carbon dioxide. Then, catalyzes the conversion of ornithine to proline, with the release of ammonia. The chain is Bifunctional arginine dihydrolase/ornithine cyclodeaminase AgrE from Nostoc sp. (strain PCC 7120 / SAG 25.82 / UTEX 2576).